Here is a 377-residue protein sequence, read N- to C-terminus: 26S proteasome non-ATPase regulatory subunit 4 (377 aa).

Residues 5–188 (STMVCVDNSE…LADALISSPI (184 aa)) form the VWFA domain. Lys122 is covalently cross-linked (Glycyl lysine isopeptide (Lys-Gly) (interchain with G-Cter in SUMO2)). Residues 197–262 (LGLGASDFEF…TEDSDDALLK (66 aa)) form an interaction with UBQLN1 region. Residues 211 to 230 (SADPELALALRVSMEEQRQR) enclose the UIM 1 domain. Residues 216 to 220 (LALAL) are essential for ubiquitin-binding. Residues 224–237 (MEEQRQRQEEEARR) show a composition bias toward basic and acidic residues. A disordered region spans residues 224 to 255 (MEEQRQRQEEEARRAAAASAAEAGIATTGTED). 2 positions are modified to phosphothreonine: Thr250 and Thr253. Phosphoserine is present on residues Ser256 and Ser266. Residues 282–301 (TEEEQIAYAMQMSLQGAEFG) form the UIM 2 domain. Positions 287–291 (IAYAM) are essential for ubiquitin-binding. Disordered regions lie at residues 300–327 (FGQA…DDYD) and 341–377 (NLPG…EDKK). 2 positions are modified to phosphoserine: Ser358 and Ser361. Positions 365-377 (KDGKKDKKEEDKK) are enriched in basic and acidic residues.

This sequence belongs to the proteasome subunit S5A family. Component of the 19S proteasome regulatory particle complex. The 26S proteasome consists of a 20S core particle (CP) and two 19S regulatory subunits (RP). The regulatory particle is made of a lid composed of 9 subunits, a base containing 6 ATPases and few additional components including PSMD4. Interacts with NUB1. Interacts with SQSTM1. Interacts with UBQLN4. Interacts with UBE3A. Interacts with UBQLN1 (via ubiquitin-like domain). Interacts with DDI2.

Component of the 26S proteasome, a multiprotein complex involved in the ATP-dependent degradation of ubiquitinated proteins. This complex plays a key role in the maintenance of protein homeostasis by removing misfolded or damaged proteins, which could impair cellular functions, and by removing proteins whose functions are no longer required. Therefore, the proteasome participates in numerous cellular processes, including cell cycle progression, apoptosis, or DNA damage repair. PSMD4 acts as an ubiquitin receptor subunit through ubiquitin-interacting motifs and selects ubiquitin-conjugates for destruction. Displays a preferred selectivity for longer polyubiquitin chains. This is 26S proteasome non-ATPase regulatory subunit 4 (PSMD4) from Homo sapiens (Human).